Here is a 370-residue protein sequence, read N- to C-terminus: Histidinol-phosphate aminotransferase 1 (370 aa).

Lysine 222 bears the N6-(pyridoxal phosphate)lysine mark.

It belongs to the class-II pyridoxal-phosphate-dependent aminotransferase family. Histidinol-phosphate aminotransferase subfamily. In terms of assembly, homodimer. It depends on pyridoxal 5'-phosphate as a cofactor.

It catalyses the reaction L-histidinol phosphate + 2-oxoglutarate = 3-(imidazol-4-yl)-2-oxopropyl phosphate + L-glutamate. It participates in amino-acid biosynthesis; L-histidine biosynthesis; L-histidine from 5-phospho-alpha-D-ribose 1-diphosphate: step 7/9. This chain is Histidinol-phosphate aminotransferase 1, found in Bacillus cereus (strain ZK / E33L).